Here is a 313-residue protein sequence, read N- to C-terminus: Protoheme IX farnesyltransferase (313 aa).

8 consecutive transmembrane segments (helical) span residues Val-32 to His-52, Pro-53 to Leu-73, Val-120 to Ile-140, Ile-153 to Gly-173, Leu-180 to Phe-200, Ile-226 to Phe-246, Ala-248 to Val-268, and Leu-284 to Val-304.

This sequence belongs to the UbiA prenyltransferase family. Protoheme IX farnesyltransferase subfamily.

It is found in the cell inner membrane. It catalyses the reaction heme b + (2E,6E)-farnesyl diphosphate + H2O = Fe(II)-heme o + diphosphate. It functions in the pathway porphyrin-containing compound metabolism; heme O biosynthesis; heme O from protoheme: step 1/1. In terms of biological role, converts heme B (protoheme IX) to heme O by substitution of the vinyl group on carbon 2 of heme B porphyrin ring with a hydroxyethyl farnesyl side group. This Rhodopseudomonas palustris (strain BisB5) protein is Protoheme IX farnesyltransferase.